We begin with the raw amino-acid sequence, 578 residues long: Glycosyltransferase family 92 protein RCOM_0530710 (578 aa).

The chain crosses the membrane as a helical span at residues 21 to 43; that stretch reads SFFSVRSLTACLSFFVFLLFISS. The GT92 domain maps to 295–531; sequence YELCACTMLW…QNQGSKDRAP (237 aa).

The protein belongs to the glycosyltransferase 92 family.

The protein localises to the membrane. This Ricinus communis (Castor bean) protein is Glycosyltransferase family 92 protein RCOM_0530710.